The chain runs to 409 residues: Putative lipoate-protein ligase A (409 aa).

In terms of domain architecture, BPL/LPL catalytic spans 146–330; that stretch reads GPDNCRLLFY…RFQKTFKVDG (185 aa). Residues Arg188, 193 to 196, and Lys249 contribute to the ATP site; that span reads GTVL. Lys249 is a (R)-lipoate binding site.

It belongs to the LplA family. In terms of assembly, monomer.

The enzyme catalyses L-lysyl-[lipoyl-carrier protein] + (R)-lipoate + ATP = N(6)-[(R)-lipoyl]-L-lysyl-[lipoyl-carrier protein] + AMP + diphosphate + H(+). It participates in protein modification; protein lipoylation via exogenous pathway; protein N(6)-(lipoyl)lysine from lipoate: step 1/2. It functions in the pathway protein modification; protein lipoylation via exogenous pathway; protein N(6)-(lipoyl)lysine from lipoate: step 2/2. Catalyzes both the ATP-dependent activation of exogenously supplied lipoate to lipoyl-AMP and the transfer of the activated lipoyl onto the lipoyl domains of lipoate-dependent enzymes. This Saccharomyces cerevisiae (strain RM11-1a) (Baker's yeast) protein is Putative lipoate-protein ligase A (AIM22).